The sequence spans 434 residues: UDP-glucuronate 4-epimerase 2 (434 aa).

The next 2 membrane-spanning stretches (helical) occupy residues 32 to 52 and 91 to 111; these read SVAKLAFWSLVFFGLLFIFFY and GVSVLVTGAAGFVGTHVSAAL. 93-124 contacts NAD(+); it reads SVLVTGAAGFVGTHVSAALKRRGDGVLGLDNF. Tyr243 serves as the catalytic Proton acceptor.

This sequence belongs to the NAD(P)-dependent epimerase/dehydratase family. As to quaternary structure, homodimer. As to expression, in roots, leaves, siliques, flowers, pollen and stems.

The protein resides in the golgi apparatus. It localises to the golgi stack membrane. It catalyses the reaction UDP-alpha-D-glucuronate = UDP-alpha-D-galacturonate. In terms of biological role, involved in the synthesis of the negatively charged monosaccharide that forms the backbone of pectic cell wall components. In Arabidopsis thaliana (Mouse-ear cress), this protein is UDP-glucuronate 4-epimerase 2 (GAE2).